A 504-amino-acid chain; its full sequence is Apoptosis inhibitor 5 (504 aa).

The tract at residues 1 to 360 (MPTVEELYRN…HQLGRKLPDF (360 aa)) is ARM-like and Heat-like helical repeats. Lys251 bears the N6-acetyllysine mark. The segment at 370–391 (LKDFKIRLQYFARGLQVYIRQL) is leucine-zipper. Thr399 is modified (phosphothreonine). The tract at residues 452-504 (GQKRASEDTTSGSPPKKSSAGPKRDARQIYNPPSGKYSSNLGNFNYERSLQGK) is disordered. Residues 454 to 475 (KRASEDTTSGSPPKKSSAGPKR) carry the Nuclear localization signal motif. Phosphoserine occurs at positions 462, 464, and 469. Over residues 462-472 (SGSPPKKSSAG) the composition is skewed to low complexity. Positions 487-504 (KYSSNLGNFNYERSLQGK) are enriched in polar residues.

Belongs to the API5 family. In terms of assembly, monomer. Interacts with FGF2 and ACIN1. Acetylation at Lys-251 impairs antiapoptotic function.

Its subcellular location is the nucleus. It is found in the cytoplasm. Antiapoptotic factor that may have a role in protein assembly. Negatively regulates ACIN1. By binding to ACIN1, it suppresses ACIN1 cleavage from CASP3 and ACIN1-mediated DNA fragmentation. Also known to efficiently suppress E2F1-induced apoptosis. The chain is Apoptosis inhibitor 5 (API5) from Pongo abelii (Sumatran orangutan).